The following is a 519-amino-acid chain: T-complex protein 11-like protein 2 (519 aa).

The tract at residues 1-30 (MPFNGEKQCVGEDQPSDSDSSRFSESMASL) is disordered. Ser16 carries the post-translational modification Phosphoserine. A compositionally biased stretch (low complexity) spans 17–29 (DSDSSRFSESMAS).

Belongs to the TCP11 family. Interacts with FMNL2; this interaction promotes muscle-derived satellite cell (MDSC) migration and differentiation.

Its subcellular location is the cytoplasm. The protein resides in the cytoskeleton. In terms of biological role, promotes the migration of muscle-derived satellite cells (MDSCs) during differentiation throught interaction with FMNL2 and therefore may participate in microfilament assembly. The sequence is that of T-complex protein 11-like protein 2 from Homo sapiens (Human).